Consider the following 1262-residue polypeptide: Separin homolog sep-1 (1262 aa).

A Peptidase C50 domain is found at 957–1051; the sequence is VQNAYYILDP…SVRTIPQALG (95 aa). Cysteine 1040 is an active-site residue. Residues 1147 to 1262 form a disordered region; the sequence is KDQRNLPQTP…ARTPSRSRNL (116 aa). Polar residues-rich tracts occupy residues 1151-1162 and 1177-1197; these read NLPQTPKTSART and FVTSKSVPMTPIFSNNENKSP. Residues 1243–1262 show a composition bias toward low complexity; it reads TPTTRTTRSSARTPSRSRNL.

In terms of assembly, forms a complex with securin-like protein ify-1 (via C-terminus). Interaction with ify-1 stabilizes sep-1. Also maintains the complex in the cytoplasm during interphase and recruits it to chromosomes during the first meiotic division. In terms of tissue distribution, expressed in oocytes. Expressed in male germline. Expressed in spermatocytes but undetectable in spermatids (at protein level).

It localises to the cytoplasm. It is found in the chromosome. The protein localises to the cytoplasmic granule. Its subcellular location is the cytoskeleton. The protein resides in the microtubule organizing center. It localises to the centrosome. It is found in the spindle. The protein localises to the cleavage furrow. Its subcellular location is the midbody. The catalysed reaction is All bonds known to be hydrolyzed by this endopeptidase have arginine in P1 and an acidic residue in P4. P6 is often occupied by an acidic residue or by a hydroxy-amino-acid residue, the phosphorylation of which enhances cleavage.. Its activity is regulated as follows. Probably maintained in an inactive state via its interaction with securin ify-1 which acts as a pseudosubstrate thereby blocking access to the catalytic site. Upon ify-1 degradation at the onset of anaphase, sep-1 is likely to become active. In addition, interaction with ify-1 stabilizes sep-1. Cysteine protease, which plays a central role in homologous chromosome separation during meiosis I and in sister chromatid separation during embryonic mitosis. Promotes chromosome/sister chromatid segregation by cleaving the scc-1 (mitosis) and rec-8 (meiosis) subunits of the cohesin complex at the onset of anaphase. May cleave histone H3-like protein cpar-1 during meiosis I metaphase-anaphase transition. Promotes cortical granule exocytosis after oocyte fertilization during the first meiotic anaphase. Essential for embryonic cytokinesis by regulating rab-11-positive vesicle trafficking at the plasma membrane at the cleavage furrow and midbody. Regulates centriole segregation during spermatocyte meiosis. Required for embryonic anterior-posterior axis formation. The sequence is that of Separin homolog sep-1 from Caenorhabditis elegans.